The following is a 147-amino-acid chain: 3-dehydroquinate dehydratase (147 aa).

The active-site Proton acceptor is Y24. Residues N75, H81, and D88 each coordinate substrate. The active-site Proton donor is H101. Substrate contacts are provided by residues 102 to 103 and R112; that span reads IS.

It belongs to the type-II 3-dehydroquinase family. As to quaternary structure, homododecamer.

It catalyses the reaction 3-dehydroquinate = 3-dehydroshikimate + H2O. It functions in the pathway metabolic intermediate biosynthesis; chorismate biosynthesis; chorismate from D-erythrose 4-phosphate and phosphoenolpyruvate: step 3/7. Catalyzes a trans-dehydration via an enolate intermediate. This Cereibacter sphaeroides (strain ATCC 17023 / DSM 158 / JCM 6121 / CCUG 31486 / LMG 2827 / NBRC 12203 / NCIMB 8253 / ATH 2.4.1.) (Rhodobacter sphaeroides) protein is 3-dehydroquinate dehydratase.